The following is a 239-amino-acid chain: Lipid transferase CIDEC (239 aa).

Positions 1–35 are required for liquid-liquid phase separation (LLPS); sequence MDYAMKSLSLLYPRSLSRHVAVSTAVVTQQLVSKP. The CIDE-N domain maps to 41–118; that stretch reads RARPCRVSTA…VLLKGQKWKP (78 aa). The short motif at 123 to 126 is the RKKR polybasic motif element; the sequence is RKKR.

It belongs to the CIDE family. As to quaternary structure, homodimer. Homooligomer; undergoes liquid-liquid phase separation (LLPS) via its N-terminus, facilitating lipid droplet fusion, occurs at the lipid droplet contact sites. Interacts with CIDEA. Interacts with PLIN1. Interacts with NFAT5; this interaction is direct and retains NFAT5 in the cytoplasm. Interacts with CEBPB. Interacts with isoform CLSTN3beta of CLSTN3; inhibiting the lipid transferase activity of CIDEC. In terms of processing, ubiquitinated and targeted to proteasomal degradation, resulting in a short half-life (about 15 minutes in 3T3-L1 cells). Protein stability depends on triaclyglycerol synthesis, fatty acid availability and lipid droplet formation. In terms of tissue distribution, expressed almost exclusively in adipose tissue, including subcutaneous and epididymal white adipose tissue (at protein level). Although abundantly present in brown adipose tissue at the mRNA level, the protein is almost undetectable in this tissue, or at moderate levels. Expressed in the mammary gland, in stromal adipose tissue, but becomes undetectable at the end of pregnancy and during lactation (at protein level). Expressed at low levels in skeletal muscle and heart.

The protein resides in the lipid droplet. It localises to the endoplasmic reticulum. It is found in the nucleus. It carries out the reaction a triacyl-sn-glycerol(in) = a triacyl-sn-glycerol(out). Its function is as follows. Lipid transferase specifically expressed in white adipose tissue, which promotes unilocular lipid droplet formation by mediating lipid droplet fusion. Lipid droplet fusion promotes their enlargement, restricting lipolysis and favoring lipid storage. Localizes on the lipid droplet surface, at focal contact sites between lipid droplets, and mediates atypical lipid droplet fusion by undergoing liquid-liquid phase separation (LLPS) and promoting directional net neutral lipid transfer from the smaller to larger lipid droplets. The transfer direction may be driven by the internal pressure difference between the contacting lipid droplet pair. Its role in neutral lipid transfer and lipid droplet enlargement is activated by the interaction with PLIN1. May also act as a CEBPB coactivator in the white adipose tissue to control the expression of a subset of CEBPB downstream target genes, including SOCS1, SOCS3, TGFB1, TGFBR1, ID2 and XDH. When overexpressed in preadipocytes, induces apoptosis or increases cell susceptibility to apoptosis induced by serum deprivation or TGFB treatment. This chain is Lipid transferase CIDEC, found in Mus musculus (Mouse).